A 704-amino-acid chain; its full sequence is Polyribonucleotide nucleotidyltransferase 4 (704 aa).

Mg(2+)-binding residues include Asp-483 and Asp-489. The KH domain maps to 550–609 (PRVLKMKIHPDKIRDVIGSGGKTINRIIDETGVKIDIDNDGTIFIAAESQEAVEKAIIII). Residues 619-687 (GQNYTGKVIK…QQGKINLSRK (69 aa)) form the S1 motif domain.

It belongs to the polyribonucleotide nucleotidyltransferase family. Mg(2+) is required as a cofactor.

It is found in the cytoplasm. It carries out the reaction RNA(n+1) + phosphate = RNA(n) + a ribonucleoside 5'-diphosphate. Functionally, involved in mRNA degradation. Catalyzes the phosphorolysis of single-stranded polyribonucleotides processively in the 3'- to 5'-direction. The polypeptide is Polyribonucleotide nucleotidyltransferase 4 (Alkaliphilus metalliredigens (strain QYMF)).